The primary structure comprises 172 residues: ATP synthase subunit b (172 aa).

A helical membrane pass occupies residues 5-24 (LLMLLLLGSVSLFANEAAAS).

The protein belongs to the ATPase B chain family. In terms of assembly, F-type ATPases have 2 components, F(1) - the catalytic core - and F(0) - the membrane proton channel. F(1) has five subunits: alpha(3), beta(3), gamma(1), delta(1), epsilon(1). F(0) has three main subunits: a(1), b(2) and c(10-14). The alpha and beta chains form an alternating ring which encloses part of the gamma chain. F(1) is attached to F(0) by a central stalk formed by the gamma and epsilon chains, while a peripheral stalk is formed by the delta and b chains.

It localises to the cell inner membrane. Functionally, f(1)F(0) ATP synthase produces ATP from ADP in the presence of a proton or sodium gradient. F-type ATPases consist of two structural domains, F(1) containing the extramembraneous catalytic core and F(0) containing the membrane proton channel, linked together by a central stalk and a peripheral stalk. During catalysis, ATP synthesis in the catalytic domain of F(1) is coupled via a rotary mechanism of the central stalk subunits to proton translocation. In terms of biological role, component of the F(0) channel, it forms part of the peripheral stalk, linking F(1) to F(0). The sequence is that of ATP synthase subunit b from Nitratiruptor sp. (strain SB155-2).